The primary structure comprises 431 residues: Beta-lactamase hydrolase-like protein (431 aa).

Zn(2+) contacts are provided by H212, H214, and H286. D309 contributes to the substrate binding site.

This sequence belongs to the metallo-beta-lactamase superfamily. Zn(2+) serves as cofactor.

Its function is as follows. Could play a role in cell adherence or biofilm development. The protein is Beta-lactamase hydrolase-like protein of Xylella fastidiosa (strain 9a5c).